The chain runs to 459 residues: UDP-N-acetylmuramoylalanine--D-glutamate ligase (459 aa).

119–125 (GTNGKTT) lines the ATP pocket.

It belongs to the MurCDEF family.

Its subcellular location is the cytoplasm. It carries out the reaction UDP-N-acetyl-alpha-D-muramoyl-L-alanine + D-glutamate + ATP = UDP-N-acetyl-alpha-D-muramoyl-L-alanyl-D-glutamate + ADP + phosphate + H(+). The protein operates within cell wall biogenesis; peptidoglycan biosynthesis. In terms of biological role, cell wall formation. Catalyzes the addition of glutamate to the nucleotide precursor UDP-N-acetylmuramoyl-L-alanine (UMA). This Lacticaseibacillus paracasei (strain ATCC 334 / BCRC 17002 / CCUG 31169 / CIP 107868 / KCTC 3260 / NRRL B-441) (Lactobacillus paracasei) protein is UDP-N-acetylmuramoylalanine--D-glutamate ligase.